The chain runs to 70 residues: Pyruvate-flavodoxin oxidoreductase (70 aa).

Belongs to the pyruvate:ferredoxin/flavodoxin oxidoreductase family.

It carries out the reaction oxidized [flavodoxin] + pyruvate + CoA + 2 H(+) = reduced [flavodoxin] + acetyl-CoA + CO2. Its function is as follows. Oxidoreductase required for the transfer of electrons from pyruvate to flavodoxin, which reduces nitrogenase. This chain is Pyruvate-flavodoxin oxidoreductase (nifJ), found in Anabaena variabilis.